We begin with the raw amino-acid sequence, 64 residues long: Alpha-conotoxin CnIL (64 aa).

A signal peptide spans 1-21; the sequence is MGMRMMFTVFLLVVLTTTVVS. The propeptide occupies 22–49; that stretch reads FPSDSASDGRDDEAKDERSDIYESKRDG. 2 disulfides stabilise this stretch: cysteine 51–cysteine 56 and cysteine 52–cysteine 62. At cysteine 62 the chain carries Cysteine amide.

This sequence belongs to the conotoxin A superfamily. As to expression, expressed by the venom duct.

The protein localises to the secreted. This is Alpha-conotoxin CnIL from Conus consors (Singed cone).